Consider the following 95-residue polypeptide: Large ribosomal subunit protein eL30 (95 aa).

The protein belongs to the eukaryotic ribosomal protein eL30 family.

This chain is Large ribosomal subunit protein eL30, found in Methanospirillum hungatei JF-1 (strain ATCC 27890 / DSM 864 / NBRC 100397 / JF-1).